Reading from the N-terminus, the 374-residue chain is Alpha-N-acetylgalactosaminide alpha-2,6-sialyltransferase 2 (374 aa).

The Cytoplasmic segment spans residues 1–7 (MGLPRGS). The helical; Signal-anchor for type II membrane protein transmembrane segment at 8–28 (FFWLLLLLTAACSGLLFALYF) threads the bilayer. At 29 to 374 (SAVQRYPGPA…KAGILQLYQR (346 aa)) the chain is on the lumenal side. 2 cysteine pairs are disulfide-bonded: Cys66–Cys148 and Cys151–Cys317. N-linked (GlcNAc...) asparagine glycosylation is found at Asn85 and Asn130. Residue Asn156 participates in CMP-N-acetyl-beta-neuraminate binding. N-linked (GlcNAc...) asparagine glycosylation is present at Asn161. Residues Asn179, Ser304, and His336 each contribute to the CMP-N-acetyl-beta-neuraminate site.

This sequence belongs to the glycosyltransferase 29 family. In terms of tissue distribution, expressed in skeletal muscle, heart, kidney, placenta, lung and leukocytes.

The protein resides in the golgi apparatus membrane. The catalysed reaction is a beta-D-galactosyl-(1-&gt;3)-N-acetyl-alpha-D-galactosaminyl derivative + CMP-N-acetyl-beta-neuraminate = a beta-D-galactosyl-(1-&gt;3)-[N-acetyl-alpha-neuraminyl-(2-&gt;6)]-N-acetyl-alpha-D-galactosaminyl derivative + CMP + H(+). It catalyses the reaction a 3-O-[N-acetyl-alpha-D-galactosaminyl]-L-threonyl-[protein] + CMP-N-acetyl-beta-neuraminate = a 3-O-[N-acetyl-alpha-neuraminosyl-(2-&gt;6)-N-acetyl-alpha-D-galactosaminyl]-L-threonyl-[protein] + CMP + H(+). It carries out the reaction a 3-O-[N-acetyl-alpha-neuraminyl-(2-&gt;3)-beta-D-galactosyl-(1-&gt;3)-N-acetyl-alpha-D-galactosaminyl]-L-threonyl-[protein] + CMP-N-acetyl-beta-neuraminate = a 3-O-{alpha-Neu5Ac-(2-&gt;3)-beta-D-Gal-(1-&gt;3)-[alpha-Neu5Ac-(2-&gt;6)]-alpha-D-GalNAc}-L-threonyl-[protein] + CMP + H(+). The protein operates within protein modification; protein glycosylation. Functionally, catalyzes the transfer of N-acetylneuraminyl groups onto glycan chains in glycoproteins. Conjugates sialic acid with an alpha-2-6 linkage to N-acetylgalactosamine (GalNAc) glycan chains linked to serine or threonine in glycoproteins. Sialylates alphaGalNAc- and Galbeta1-&gt;3GalNAc-O-Ser/Thr epitopes also known as Tn and T antigens. The sequence is that of Alpha-N-acetylgalactosaminide alpha-2,6-sialyltransferase 2 (ST6GALNAC2) from Homo sapiens (Human).